Here is a 117-residue protein sequence, read N- to C-terminus: NADH-ubiquinone oxidoreductase chain 3 (117 aa).

3 consecutive transmembrane segments (helical) span residues 3–23 (LLLT…IVSF), 56–76 (FFLV…LLPL), and 85–105 (PMFT…GLIY).

It belongs to the complex I subunit 3 family.

The protein localises to the mitochondrion membrane. It catalyses the reaction a ubiquinone + NADH + 5 H(+)(in) = a ubiquinol + NAD(+) + 4 H(+)(out). Functionally, core subunit of the mitochondrial membrane respiratory chain NADH dehydrogenase (Complex I) that is believed to belong to the minimal assembly required for catalysis. Complex I functions in the transfer of electrons from NADH to the respiratory chain. The immediate electron acceptor for the enzyme is believed to be ubiquinone. The polypeptide is NADH-ubiquinone oxidoreductase chain 3 (MT-ND3) (Tetraodon nigroviridis (Spotted green pufferfish)).